A 174-amino-acid chain; its full sequence is Bifunctional protein PyrR (174 aa).

The PRPP-binding motif lies at 97-109; it reads VVIVDDVLYTGRT.

This sequence belongs to the purine/pyrimidine phosphoribosyltransferase family. PyrR subfamily. As to quaternary structure, homodimer and homohexamer; in equilibrium.

It catalyses the reaction UMP + diphosphate = 5-phospho-alpha-D-ribose 1-diphosphate + uracil. In terms of biological role, regulates transcriptional attenuation of the pyrimidine nucleotide (pyr) operon by binding in a uridine-dependent manner to specific sites on pyr mRNA. This disrupts an antiterminator hairpin in the RNA and favors formation of a downstream transcription terminator, leading to a reduced expression of downstream genes. Functionally, also displays a weak uracil phosphoribosyltransferase activity which is not physiologically significant. The polypeptide is Bifunctional protein PyrR (Macrococcus caseolyticus (strain JCSC5402) (Macrococcoides caseolyticum)).